The chain runs to 333 residues: D-alanine--D-alanine ligase (333 aa).

The ATP-grasp domain maps to 124–329 (KMWFSALGIP…FTEYLYSNIK (206 aa)). 154–209 (ALETWGSVFIKAASQGSSVGCYRVDSIDELASSLKEAFSYSPYVVVEKTIHARELE) contributes to the ATP binding site. 3 residues coordinate Mg(2+): D283, E296, and N298.

The protein belongs to the D-alanine--D-alanine ligase family. Mg(2+) is required as a cofactor. Mn(2+) serves as cofactor.

Its subcellular location is the cytoplasm. The catalysed reaction is 2 D-alanine + ATP = D-alanyl-D-alanine + ADP + phosphate + H(+). It participates in cell wall biogenesis; peptidoglycan biosynthesis. Its function is as follows. Cell wall formation. This Shewanella sediminis (strain HAW-EB3) protein is D-alanine--D-alanine ligase.